Consider the following 173-residue polypeptide: Peptidoglycan-associated lipoprotein (173 aa).

The signal sequence occupies residues 1 to 21 (MKSKKIFKILTLLLPMITTFS). Residue Cys22 is the site of N-palmitoyl cysteine attachment. Cys22 carries S-diacylglycerol cysteine lipidation. An OmpA-like domain is found at 59–173 (ETLEKLKKGN…KNRRSVIIYQ (115 aa)).

The protein belongs to the Pal lipoprotein family.

Its subcellular location is the cell outer membrane. This Buchnera aphidicola subsp. Baizongia pistaciae (strain Bp) protein is Peptidoglycan-associated lipoprotein.